A 637-amino-acid chain; its full sequence is Probable potassium transport system protein Kup (637 aa).

The next 12 helical transmembrane spans lie at 25-45 (ISLAALGVVFGDIGTSPLYAI), 62-82 (VLGVLSLIFWALVLIVSLKYL), 115-135 (WFLVGIGLFGASLLYGDGMIT), 149-169 (IIAPAFKDLVIPITVIILTGL), 180-200 (VGALFGPVILLWFAVIGVLGL), 227-247 (LQGFMVLGAVFLSVTGAEALY), 263-283 (ILFVLPALLLNYFGQGALLLF), 295-315 (LVPSWAMIPMVILATSATIIA), 352-372 (IYVPGANWALMYATIGLVIGF), 378-398 (LAAAYGVAVTATMLISTILFY), 410-430 (LATNLLVSFFFVIDLAFFGAS), and 434-454 (LFHGAWFPLVIGLVLFTLMLT).

This sequence belongs to the HAK/KUP transporter (TC 2.A.72) family.

The protein resides in the cell inner membrane. It carries out the reaction K(+)(in) + H(+)(in) = K(+)(out) + H(+)(out). Functionally, transport of potassium into the cell. Likely operates as a K(+):H(+) symporter. The polypeptide is Probable potassium transport system protein Kup (Chlorobium phaeobacteroides (strain DSM 266 / SMG 266 / 2430)).